The following is a 42-amino-acid chain: Lebocin-like anionic peptide 1 (42 aa).

In terms of tissue distribution, hemolymph.

The protein localises to the secreted. Antimicrobial protein. Has antibacterial activity against the Gram-positive bacteria M.luteus (MIC=22.7 uM) and L.monocytogenes (MIC=90.9 uM). Lacks antibacterial activity against the Gram-positive bacteria B.circulans, S.aureus, and S.lutea, and the Gram-negative bacteria E.coli D31, E.coli ATCC 25922, and S.typhimurium. Has antifungal activity against A.niger (MIC=90.9 uM) and T.harzianum (MIC=90.9 uM), but lacks antifungal activity against S.cerevisiae, P.pastoris, Z.marxianus, C.albicans, C.fructus, and F.oxysporum. The polypeptide is Lebocin-like anionic peptide 1 (Galleria mellonella (Greater wax moth)).